Consider the following 230-residue polypeptide: Esterase OVCA2 (230 aa).

Residues Ser124, Asp182, and His209 each act as charge relay system in the active site.

It belongs to the LovG family.

It catalyses the reaction a carboxylic ester + H2O = an alcohol + a carboxylate + H(+). In terms of biological role, exhibits ester hydrolase activity with a strong preference for long-chain alkyl ester substrates and high selectivity against a variety of short, branched, and substituted esters. Is able to hydrolyze ester bonds within a wide range of p-nitrophenyl derivatives (C2-C14) in vitro, with a strong preference toward substrates of &gt;8 carbons. The polypeptide is Esterase OVCA2 (ovca2) (Xenopus tropicalis (Western clawed frog)).